A 1361-amino-acid chain; its full sequence is DNA-directed RNA polymerase subunit beta'' (1361 aa).

The Zn(2+) site is built by Cys224, Cys295, Cys302, and Cys305.

The protein belongs to the RNA polymerase beta' chain family. RpoC2 subfamily. In plastids the minimal PEP RNA polymerase catalytic core is composed of four subunits: alpha, beta, beta', and beta''. When a (nuclear-encoded) sigma factor is associated with the core the holoenzyme is formed, which can initiate transcription. Zn(2+) is required as a cofactor.

The protein resides in the plastid. It localises to the chloroplast. It catalyses the reaction RNA(n) + a ribonucleoside 5'-triphosphate = RNA(n+1) + diphosphate. DNA-dependent RNA polymerase catalyzes the transcription of DNA into RNA using the four ribonucleoside triphosphates as substrates. The polypeptide is DNA-directed RNA polymerase subunit beta'' (Spinacia oleracea (Spinach)).